A 310-amino-acid polypeptide reads, in one-letter code: Beta-ketoacyl-[acyl-carrier-protein] synthase III 1 (310 aa).

Residues cysteine 112 and histidine 235 contribute to the active site. The ACP-binding stretch occupies residues 236–240; sequence QANIR. Asparagine 265 is a catalytic residue.

Belongs to the thiolase-like superfamily. FabH family. Homodimer.

Its subcellular location is the cytoplasm. It catalyses the reaction malonyl-[ACP] + acetyl-CoA + H(+) = 3-oxobutanoyl-[ACP] + CO2 + CoA. It functions in the pathway lipid metabolism; fatty acid biosynthesis. Catalyzes the condensation reaction of fatty acid synthesis by the addition to an acyl acceptor of two carbons from malonyl-ACP. Catalyzes the first condensation reaction which initiates fatty acid synthesis and may therefore play a role in governing the total rate of fatty acid production. Possesses both acetoacetyl-ACP synthase and acetyl transacylase activities. Its substrate specificity determines the biosynthesis of branched-chain and/or straight-chain of fatty acids. In Bacillus anthracis, this protein is Beta-ketoacyl-[acyl-carrier-protein] synthase III 1.